The chain runs to 312 residues: 2-phosphoglycerate kinase (312 aa).

Residues 8-95 (SRILVTDKEY…LWRRVLKKHS (88 aa)) enclose the ATP-cone domain.

Belongs to the 2-phosphoglycerate kinase family. The cofactor is a divalent metal cation.

The catalysed reaction is (2R)-2-phosphoglycerate + ATP = (2R)-2,3-bisphosphoglycerate + ADP + H(+). The protein operates within thermoadapter biosynthesis; cyclic 2,3-diphosphoglycerate biosynthesis; cyclic 2,3-diphosphoglycerate from 2-phospho-D-glycerate: step 1/2. Functionally, catalyzes the phosphorylation of 2-phosphoglycerate to 2,3-diphosphoglycerate. Involved in the biosynthesis of cyclic 2,3-bisphosphoglycerate, a thermoprotectant. This Methanococcus maripaludis (strain C7 / ATCC BAA-1331) protein is 2-phosphoglycerate kinase.